The sequence spans 231 residues: Thrombin-like enzyme leucurobin (231 aa).

The Peptidase S1 domain maps to 1–223 (VIGGDECDIN…YLPWIQSIIA (223 aa)). 6 cysteine pairs are disulfide-bonded: Cys7-Cys139, Cys26-Cys42, Cys74-Cys230, Cys118-Cys184, Cys150-Cys163, and Cys174-Cys199. Catalysis depends on charge relay system residues His41 and Asp86. Asn146 is a glycosylation site (N-linked (GlcNAc...) asparagine). Ser178 (charge relay system) is an active-site residue. N-linked (GlcNAc...) asparagine glycosylation is present at Asn225.

Belongs to the peptidase S1 family. Snake venom subfamily. As to quaternary structure, monomer. Glycosylated. Expressed by the venom gland.

It is found in the secreted. The catalysed reaction is Selective cleavage of Arg-|-Xaa bond in fibrinogen, to form fibrin, and release fibrinopeptide A. The specificity of further degradation of fibrinogen varies with species origin of the enzyme.. Its activity is regulated as follows. Inhibited by PMSF and benzamidine. Its clotting effect is strongly inhibited by antibothropic serum. Is not inhibited by heparin. Thrombin-like snake venom serine protease that cleaves Arg-Gly bonds in alpha-chain of fibrinogen (FGA). Induces temporary episodes of opisthotonos and rapid rolling around the long axis of the animal (gyroxin-like effect), when injected into the tail veins of mice (0.143 ug/g mouse). The polypeptide is Thrombin-like enzyme leucurobin (Bothrops leucurus (Whitetail lancehead)).